Here is a 442-residue protein sequence, read N- to C-terminus: Glutamyl-tRNA(Gln) amidotransferase subunit A (442 aa).

Active-site charge relay system residues include K50 and S125. Residue S149 is the Acyl-ester intermediate of the active site.

Belongs to the amidase family. GatA subfamily. In terms of assembly, heterotrimer of A, B and C subunits.

It catalyses the reaction L-glutamyl-tRNA(Gln) + L-glutamine + ATP + H2O = L-glutaminyl-tRNA(Gln) + L-glutamate + ADP + phosphate + H(+). Its function is as follows. Allows the formation of correctly charged Gln-tRNA(Gln) through the transamidation of misacylated Glu-tRNA(Gln) in organisms which lack glutaminyl-tRNA synthetase. The reaction takes place in the presence of glutamine and ATP through an activated gamma-phospho-Glu-tRNA(Gln). This Nitratiruptor sp. (strain SB155-2) protein is Glutamyl-tRNA(Gln) amidotransferase subunit A.